A 418-amino-acid polypeptide reads, in one-letter code: UDP-N-acetylglucosamine 1-carboxyvinyltransferase (418 aa).

Residue 22 to 23 coordinates phosphoenolpyruvate; it reads KN. Residue arginine 93 coordinates UDP-N-acetyl-alpha-D-glucosamine. The active-site Proton donor is cysteine 117. Position 117 is a 2-(S-cysteinyl)pyruvic acid O-phosphothioketal (cysteine 117). Residues 122–126, aspartate 306, and leucine 328 contribute to the UDP-N-acetyl-alpha-D-glucosamine site; that span reads RPIDL.

The protein belongs to the EPSP synthase family. MurA subfamily.

It is found in the cytoplasm. The enzyme catalyses phosphoenolpyruvate + UDP-N-acetyl-alpha-D-glucosamine = UDP-N-acetyl-3-O-(1-carboxyvinyl)-alpha-D-glucosamine + phosphate. It functions in the pathway cell wall biogenesis; peptidoglycan biosynthesis. Its function is as follows. Cell wall formation. Adds enolpyruvyl to UDP-N-acetylglucosamine. The chain is UDP-N-acetylglucosamine 1-carboxyvinyltransferase from Campylobacter hominis (strain ATCC BAA-381 / DSM 21671 / CCUG 45161 / LMG 19568 / NCTC 13146 / CH001A).